The sequence spans 118 residues: Small ribosomal subunit protein bS6 (118 aa).

The tract at residues Thr-98–Glu-118 is disordered. Positions Ala-99–Glu-118 are enriched in low complexity.

It belongs to the bacterial ribosomal protein bS6 family.

Its function is as follows. Binds together with bS18 to 16S ribosomal RNA. In Geobacter metallireducens (strain ATCC 53774 / DSM 7210 / GS-15), this protein is Small ribosomal subunit protein bS6.